Consider the following 219-residue polypeptide: MISNSEYHKEYMKGTTTVGLLCKDGVVLATDKRATMGNLIADKEAKKLYKIDDYIAMTIAGSVGDAQSLIRLISAEAKIYKMRTGNNMTPLSCTTLISNVLHGNRHYPLLTQLILGGYDLINGAKLFSLDPVGGINEESSFTATGSGSPTAYGVLEAEYRSDVTIDKGLLVAVKALSSAMQRDAYSGNGISLAHINKDGVNIYSDEEIEGFLKKINKKR.

The propeptide at 1–14 (MISNSEYHKEYMKG) is removed in mature form; by autocatalysis. Thr-15 serves as the catalytic Nucleophile.

The protein belongs to the peptidase T1B family. In terms of assembly, the 20S proteasome core is composed of 14 alpha and 14 beta subunits that assemble into four stacked heptameric rings, resulting in a barrel-shaped structure. The two inner rings, each composed of seven catalytic beta subunits, are sandwiched by two outer rings, each composed of seven alpha subunits. The catalytic chamber with the active sites is on the inside of the barrel. Has a gated structure, the ends of the cylinder being occluded by the N-termini of the alpha-subunits. Is capped at one or both ends by the proteasome regulatory ATPase, PAN.

The protein localises to the cytoplasm. The catalysed reaction is Cleavage of peptide bonds with very broad specificity.. With respect to regulation, the formation of the proteasomal ATPase PAN-20S proteasome complex, via the docking of the C-termini of PAN into the intersubunit pockets in the alpha-rings, triggers opening of the gate for substrate entry. Interconversion between the open-gate and close-gate conformations leads to a dynamic regulation of the 20S proteasome proteolysis activity. Functionally, component of the proteasome core, a large protease complex with broad specificity involved in protein degradation. This is Proteasome subunit beta from Methanococcus maripaludis (strain C6 / ATCC BAA-1332).